A 277-amino-acid polypeptide reads, in one-letter code: Uridine phosphorylase (277 aa).

Belongs to the PNP/UDP phosphorylase family.

It localises to the cytoplasm. It carries out the reaction uridine + phosphate = alpha-D-ribose 1-phosphate + uracil. The protein operates within pyrimidine metabolism; UMP biosynthesis via salvage pathway; uracil from uridine (phosphorylase route): step 1/1. In terms of biological role, catalyzes the reversible phosphorylytic cleavage of uridine to uracil and ribose-1-phosphate. The chain is Uridine phosphorylase from Thermococcus kodakarensis (strain ATCC BAA-918 / JCM 12380 / KOD1) (Pyrococcus kodakaraensis (strain KOD1)).